The primary structure comprises 79 residues: Quinohemoprotein amine dehydrogenase subunit gamma (79 aa).

The segment at residues 7 to 16 (CTATTDPGWE) is a cross-link (4-cysteinyl-glutamic acid (Cys-Glu)). Cross-links (3-cysteinyl-aspartic acid (Cys-Asp)) lie at residues 27-33 (CQPMEAD) and 41-49 (CWWPAQVPD). Aspartate 33 acts as the Proton acceptor in catalysis. Residues 37-43 (CSDPCWW) constitute a cross-link (4'-cysteinyl-tryptophylquinone (Cys-Trp)). Tryptophylquinone is present on tryptophan 43.

The protein belongs to the quinohemoprotein amine dehydrogenase subunit gamma family. Heterotrimer of an alpha, a beta and a gamma subunit. It depends on cysteine tryptophylquinone residue as a cofactor. The cysteine tryptophylquinone (CTQ) is generated by oxidation of the indole ring of a tryptophan residue to form tryptophylquinone, followed by covalent cross-linking with a cysteine residue.

The protein resides in the periplasm. It catalyses the reaction an aliphatic amine + A + H2O = an aldehyde + AH2 + NH4(+). In terms of biological role, catalyzes the oxidative deamination of a wide range of aliphatic monoamines and diamines. The physiological electron acceptor is an azurin-like blue protein. The chain is Quinohemoprotein amine dehydrogenase subunit gamma (qhnDH) from Pseudomonas putida (strain ATCC 47054 / DSM 6125 / CFBP 8728 / NCIMB 11950 / KT2440).